The sequence spans 215 residues: LexA repressor (215 aa).

The segment at residues 28-48 (RAEIAAELGFSSPNAAEEHLR) is a DNA-binding region (H-T-H motif). Active-site for autocatalytic cleavage activity residues include Ser-133 and Lys-170.

Belongs to the peptidase S24 family. As to quaternary structure, homodimer.

The enzyme catalyses Hydrolysis of Ala-|-Gly bond in repressor LexA.. Its function is as follows. Represses a number of genes involved in the response to DNA damage (SOS response), including recA and lexA. In the presence of single-stranded DNA, RecA interacts with LexA causing an autocatalytic cleavage which disrupts the DNA-binding part of LexA, leading to derepression of the SOS regulon and eventually DNA repair. This chain is LexA repressor, found in Burkholderia cenocepacia (strain ATCC BAA-245 / DSM 16553 / LMG 16656 / NCTC 13227 / J2315 / CF5610) (Burkholderia cepacia (strain J2315)).